Reading from the N-terminus, the 147-residue chain is D-aminoacyl-tRNA deacylase (147 aa).

Residues 136-137 (GP) carry the Gly-cisPro motif, important for rejection of L-amino acids motif.

This sequence belongs to the DTD family. Homodimer.

It localises to the cytoplasm. The catalysed reaction is glycyl-tRNA(Ala) + H2O = tRNA(Ala) + glycine + H(+). It carries out the reaction a D-aminoacyl-tRNA + H2O = a tRNA + a D-alpha-amino acid + H(+). Its function is as follows. An aminoacyl-tRNA editing enzyme that deacylates mischarged D-aminoacyl-tRNAs. Also deacylates mischarged glycyl-tRNA(Ala), protecting cells against glycine mischarging by AlaRS. Acts via tRNA-based rather than protein-based catalysis; rejects L-amino acids rather than detecting D-amino acids in the active site. By recycling D-aminoacyl-tRNA to D-amino acids and free tRNA molecules, this enzyme counteracts the toxicity associated with the formation of D-aminoacyl-tRNA entities in vivo and helps enforce protein L-homochirality. The chain is D-aminoacyl-tRNA deacylase from Nitratiruptor sp. (strain SB155-2).